A 369-amino-acid chain; its full sequence is Phenylalanine--tRNA ligase alpha subunit (369 aa).

Glutamate 269 is a binding site for Mg(2+).

Belongs to the class-II aminoacyl-tRNA synthetase family. Phe-tRNA synthetase alpha subunit type 1 subfamily. In terms of assembly, tetramer of two alpha and two beta subunits. Mg(2+) is required as a cofactor.

It localises to the cytoplasm. The catalysed reaction is tRNA(Phe) + L-phenylalanine + ATP = L-phenylalanyl-tRNA(Phe) + AMP + diphosphate + H(+). The sequence is that of Phenylalanine--tRNA ligase alpha subunit from Nitrobacter winogradskyi (strain ATCC 25391 / DSM 10237 / CIP 104748 / NCIMB 11846 / Nb-255).